We begin with the raw amino-acid sequence, 735 residues long: MIP-related peptides (735 aa).

Residues 1–20 (MCTRPGLAALLVLMTSCASS) form the signal peptide. Residues 21-135 (FSRADTQSAS…EDSDTKVDTR (115 aa)) constitute a propeptide that is removed on maturation. The span at 33-65 (ALSAASADAQAARQQQEQHLVAQQQQQQQQQQQ) shows a compositional bias: low complexity. 2 disordered regions span residues 33 to 212 (ALSA…FGKK) and 229 to 251 (FGKK…SRGS). Polar residues-rich tracts occupy residues 66–76 (HSNNNEPQQRA) and 101–125 (PVSQ…SGTP). Phenylalanine amide is present on residues F142, F153, and F164. Residues 142–159 (FGKKRGQAPRFFGKKRAM) show a composition bias toward basic residues. A propeptide spanning residues 168-184 (SSEFPTSNSEQLALDTR) is cleaved from the precursor. The residue at position 190 (F190) is a Phenylalanine amide. Positions 194–203 (SFPESNREQR) are excised as a propeptide. The segment covering 194–204 (SFPESNREQRG) has biased composition (basic and acidic residues). Residues F209 and F229 each carry the phenylalanine amide modification. Residues 214–229 (FDENVDIDERAAPRFF) constitute a propeptide, linker peptide. A propeptide spanning residues 233–249 (SSGESAGDSGYISVASR) is cleaved from the precursor. The residue at position 255 (F255) is a Phenylalanine amide. Residues 259 to 267 (QDDDIMIAA) constitute a propeptide, linker peptide. F274 is modified (phenylalanine amide). Positions 279–287 (SDDNVALDL) are cleaved as a propeptide — linker peptide. A Phenylalanine amide modification is found at F294. The propeptide occupies 298 to 311 (QSSDLDDEISVALR). F317 is subject to Phenylalanine amide. Residues 321–332 (RADDEDILLGER) constitute a propeptide that is removed on maturation. At F338 the chain carries Phenylalanine amide. Positions 342–353 (RANDENISFSLR) are excised as a propeptide. 2 disordered regions span residues 352 to 373 (LRGS…DNIG) and 381 to 400 (RFFG…GLMA). F359 is subject to Phenylalanine amide. The propeptide occupies 363 to 377 (RSDESDDDNIGLVAR). The residue at position 383 (F383) is a Phenylalanine amide. Residues 387–401 (RSDETDDENIGLMAR) constitute a propeptide that is removed on maturation. F407 carries the phenylalanine amide modification. A propeptide spans 412–426 (SDGLDDGGNIIDVAT) (linker peptide). Positions 430–464 (PRFFGKKRSNSDSSDKSSDSALSSSESGRQTRQAP) are disordered. At F433 the chain carries Phenylalanine amide. The propeptide occupies 437 to 461 (RSNSDSSDKSSDSALSSSESGRQTR). A compositionally biased stretch (basic and acidic residues) spans 438–447 (SNSDSSDKSS). Q462 is modified (pyrrolidone carboxylic acid). A Phenylalanine amide modification is found at F467. A propeptide spanning residues 471–493 (YVDEHHVSKRAAATAFPLIIEAR) is cleaved from the precursor. Position 494 is a pyrrolidone carboxylic acid (Q494). The residue at position 499 (F499) is a Phenylalanine amide. Residues 503 to 509 (EYRYPPR) constitute a propeptide that is removed on maturation. I515 carries the post-translational modification Isoleucine amide. Residues 519–546 (FSLYRSPGKYSLSSPYMSAKEFKETFRR) constitute a propeptide that is removed on maturation. Residue M552 is modified to Methionine amide. Positions 556–585 (TAELNEEGSDDFTNDDTDDENEYDETVLFK) are excised as a propeptide. Residue V592 is modified to Valine amide. The residue at position 601 (L601) is a Leucine amide. Position 610 is an isoleucine amide (I610). V619 bears the Valine amide mark. I628 carries the isoleucine amide modification. The propeptide at 632-661 (DLDWYQKALCAEADILELDDCADFLGNDDV) is linker peptide. Q664 bears the Pyrrolidone carboxylic acid mark. Position 669 is an isoleucine amide (I669). The propeptide at 674-705 (GEDVSERDYAQLLEALSRLQAIKQIKARIQNE) is linker peptide. V714 carries the post-translational modification Valine amide. A propeptide spanning residues 715–735 (GRRSEYNLGPFDEFVDESMER) is cleaved from the precursor.

Expressed in the CNS and peripheral tissues (the digestive tract, vasculature, and the reproductive organs).

It localises to the secreted. Its function is as follows. Has some structural and functional features similar to vertebrate opioid peptides. AMRPs are inhibitory on Aplysia esophagus, penis retractor muscle, and body wall muscle. The protein is MIP-related peptides (MRP) of Aplysia californica (California sea hare).